Consider the following 699-residue polypeptide: SPS-sensor serine protease component SSY5 (699 aa).

Disordered stretches follow at residues 1-113 and 129-158; these read MVRF…LQGF and VKEE…GNAR. Residues 1-381 constitute a propeptide that is removed on maturation; sequence MVRFFGLNKE…YCVKDYIKKA (381 aa). Positions 8 to 18 are enriched in basic and acidic residues; sequence NKEKNEEKENT. Polar residues predominate over residues 24-38; sequence NEQNAAETSSSNVSG. The segment covering 39–51 has biased composition (basic and acidic residues); the sequence is NEERIDPNSRDTN. The segment covering 61 to 78 has biased composition (low complexity); that stretch reads STTFGSSIQSSSIFSRGR. The segment covering 83-93 has biased composition (polar residues); sequence TGASSSMATSE. The span at 144–154 shows a compositional bias: low complexity; the sequence is SSSTSSTLATS. The tract at residues 459-699 is serine protease; that stretch reads FAITCAHVVL…QWDIDPQLDG (241 aa). Residues His-465, Asp-545, and Ser-640 each act as charge relay system in the active site.

It belongs to the peptidase S64 family. Component of the plasma membrane SPS (SSY1-PTR3-SSY5) amino acid sensor complex. Post-translationally, the propeptide is autoproteolytically cleaved from the catalytic domain but remains associated, forming an inactive protease complex. This processing occurs even in the absence of signaling.

The protein resides in the cell membrane. In terms of biological role, protease component of the SPS-sensor system, which regulates the expression of several amino acid-metabolizing enzymes and amino acid- and peptide-permeases in response to extracellular amino acid levels by controlling the activity of two transcription factors, STP1 and STP2. Catalyzes the activation of these transcription factors, which are synthesized as latent cytoplasmic precursors, by proteolytic removal of an N-terminal inhibitory domain containing cytoplasmic retention motifs. SSY5 binds as an inactive protease complex to STP1. In response to extracellular amino acids and dependent on the other SPS-sensor components, the inhibitory propeptide is induced to dissociate, and thereby enables the catalytic domain to process STP1. The protein is SPS-sensor serine protease component SSY5 (SSY5) of Saccharomyces cerevisiae (strain AWRI1631) (Baker's yeast).